We begin with the raw amino-acid sequence, 430 residues long: Trigger factor (430 aa).

In terms of domain architecture, PPIase FKBP-type spans 157-242; sequence GDLVALETWS…AVEVSEPVLP (86 aa).

It belongs to the FKBP-type PPIase family. Tig subfamily.

It is found in the cytoplasm. It carries out the reaction [protein]-peptidylproline (omega=180) = [protein]-peptidylproline (omega=0). In terms of biological role, involved in protein export. Acts as a chaperone by maintaining the newly synthesized protein in an open conformation. Functions as a peptidyl-prolyl cis-trans isomerase. The polypeptide is Trigger factor (Xanthomonas campestris pv. campestris (strain ATCC 33913 / DSM 3586 / NCPPB 528 / LMG 568 / P 25)).